The sequence spans 136 residues: Large ribosomal subunit protein uL16 (136 aa).

This sequence belongs to the universal ribosomal protein uL16 family. As to quaternary structure, part of the 50S ribosomal subunit.

Binds 23S rRNA and is also seen to make contacts with the A and possibly P site tRNAs. The sequence is that of Large ribosomal subunit protein uL16 from Sodalis glossinidius (strain morsitans).